A 555-amino-acid chain; its full sequence is Potassium-transporting ATPase potassium-binding subunit (555 aa).

A run of 10 helical transmembrane segments spans residues 2-22, 60-80, 130-150, 173-193, 246-266, 278-298, 374-394, 412-432, 483-503, and 525-545; these read IWVAVVITMLLFILVAKPTGI, QYALSLVLLNGFMIVVVYFVF, IGITFLMFAAPATTLALVMAF, VFLPIAFMAALVFVALGVPQT, MSNILQMMLMMLLPTALPFTY, ILFVSLFMVFLLGFITITTSE, AGFVNIIMYAIIAVFISGLMV, LIAVTILFHPLLILGFSALAL, LVMFLGRYFSLITMLAVAASL, and GIFIGTIVIVGALTFFPMLVL.

The protein belongs to the KdpA family. As to quaternary structure, the system is composed of three essential subunits: KdpA, KdpB and KdpC.

It is found in the cell membrane. Its function is as follows. Part of the high-affinity ATP-driven potassium transport (or Kdp) system, which catalyzes the hydrolysis of ATP coupled with the electrogenic transport of potassium into the cytoplasm. This subunit binds the extracellular potassium ions and delivers the ions to the membrane domain of KdpB through an intramembrane tunnel. In Bacillus cereus (strain ATCC 10987 / NRS 248), this protein is Potassium-transporting ATPase potassium-binding subunit.